The sequence spans 1086 residues: Selenocysteine insertion sequence-binding protein 2-like (1086 aa).

Disordered stretches follow at residues 155–207 (GQAF…GPDS), 243–386 (AKGR…SESL), 615–657 (QEDA…SPMA), 880–904 (SDGL…KPSR), and 919–1086 (AAGS…PQST). A compositionally biased stretch (polar residues) spans 193-206 (NVATQKETSATGPD). Residue Ser-276 is modified to Phosphoserine. Polar residues-rich tracts occupy residues 294–303 (GTMNRLESSG) and 328–344 (QAFS…NNLQ). Over residues 355–370 (SSERRQNLQKRQDNKH) the composition is skewed to basic and acidic residues. The span at 624–657 (SDASLSPASQNSPYCMTPVSQGSPASSGIGSPMA) shows a compositional bias: polar residues. Positions 922 to 931 (SITSAPSQGK) are enriched in polar residues. Basic and acidic residues predominate over residues 933–943 (TGDKDELKPDD). Residues 947–957 (ASQQSTETGSL) are compositionally biased toward polar residues. A compositionally biased stretch (acidic residues) spans 981–994 (LEEEEDEEEEEEDY). The span at 1004 to 1022 (QLNSRIESWVSETQRTMET) shows a compositional bias: polar residues. Residues 1032–1046 (SEEDSAEQSGEEAAE) are compositionally biased toward acidic residues.

In terms of biological role, binds SECIS (Sec insertion sequence) elements present on selenocysteine (Sec) protein mRNAs, but does not promote Sec incorporation into selenoproteins. This Mus musculus (Mouse) protein is Selenocysteine insertion sequence-binding protein 2-like (Secisbp2l).